The sequence spans 247 residues: ATP synthase subunit a, chloroplastic (247 aa).

5 consecutive transmembrane segments (helical) span residues 38-58, 95-115, 134-154, 199-219, and 220-240; these read QVLI…IIAV, VPFI…GALL, INTT…AGLS, LVVV…VMFL, and GLFT…AYIG.

It belongs to the ATPase A chain family. As to quaternary structure, F-type ATPases have 2 components, CF(1) - the catalytic core - and CF(0) - the membrane proton channel. CF(1) has five subunits: alpha(3), beta(3), gamma(1), delta(1), epsilon(1). CF(0) has four main subunits: a, b, b' and c.

Its subcellular location is the plastid. The protein localises to the chloroplast thylakoid membrane. In terms of biological role, key component of the proton channel; it plays a direct role in the translocation of protons across the membrane. This is ATP synthase subunit a, chloroplastic from Cucumis sativus (Cucumber).